The chain runs to 492 residues: MFSKLTPLAETGIPTLSCANAAGRLLHSDSRQIKQGDIFVACPGEYADGRSYIPAAVANGAAFVFWDDDGKFAWNPEWKVPNQGIKDLKHRAGILAAQVYGNVSDGLKVWGVAGTNGKTSITQWLAQAADLLGEKTAIVGTVGNGFWGALEETTHTTPAPVDVQTLLYRFRQQGATVAAMEVSSHGLDQSRVNGVSFRSAIFTNLTRDHLDYHGTMEAYGAIKSRLFYWHGLKHAVINVDDEYGAELVGRLKKDCPDLAVYSYGFSEHADIRITDFTASSDGIAAVFQTPWGEGKCRTRLLGRFNAQNLAACIALLCANGYPLDKVLDVLAKIRPASGRMDCIMNSGKPLVVVDYAHTPDALEKALATLQEIKPQGAALWCVFGCGGNRDRGKRPLMGAAAVQGADKVVVTSDNPRLENPHDIINDILPAVPAPECVEADRAAAVRYAVEQAAANDIILIAGKGHENYQDVQGVKHRFSDLEIVGQALLTRK.

A UDP-N-acetyl-alpha-D-muramoyl-L-alanyl-D-glutamate-binding site is contributed by serine 30. 114-120 (GTNGKTS) is a binding site for ATP. Residues 156–157 (TT), serine 183, glutamine 189, and arginine 191 each bind UDP-N-acetyl-alpha-D-muramoyl-L-alanyl-D-glutamate. At lysine 223 the chain carries N6-carboxylysine. Meso-2,6-diaminopimelate is bound by residues arginine 389, 413 to 416 (DNPR), glycine 462, and glutamate 466. The Meso-diaminopimelate recognition motif motif lies at 413-416 (DNPR).

The protein belongs to the MurCDEF family. MurE subfamily. Mg(2+) serves as cofactor. Post-translationally, carboxylation is probably crucial for Mg(2+) binding and, consequently, for the gamma-phosphate positioning of ATP.

It is found in the cytoplasm. The catalysed reaction is UDP-N-acetyl-alpha-D-muramoyl-L-alanyl-D-glutamate + meso-2,6-diaminopimelate + ATP = UDP-N-acetyl-alpha-D-muramoyl-L-alanyl-gamma-D-glutamyl-meso-2,6-diaminopimelate + ADP + phosphate + H(+). The protein operates within cell wall biogenesis; peptidoglycan biosynthesis. Functionally, catalyzes the addition of meso-diaminopimelic acid to the nucleotide precursor UDP-N-acetylmuramoyl-L-alanyl-D-glutamate (UMAG) in the biosynthesis of bacterial cell-wall peptidoglycan. In Neisseria meningitidis serogroup B (strain ATCC BAA-335 / MC58), this protein is UDP-N-acetylmuramoyl-L-alanyl-D-glutamate--2,6-diaminopimelate ligase.